The sequence spans 770 residues: 3-isopropylmalate dehydratase (770 aa).

C354, C415, and C418 together coordinate [4Fe-4S] cluster.

Belongs to the aconitase/IPM isomerase family. In terms of assembly, monomer. Requires [4Fe-4S] cluster as cofactor.

The enzyme catalyses (2R,3S)-3-isopropylmalate = (2S)-2-isopropylmalate. It participates in amino-acid biosynthesis; L-leucine biosynthesis; L-leucine from 3-methyl-2-oxobutanoate: step 2/4. Functionally, catalyzes the isomerization between 2-isopropylmalate and 3-isopropylmalate, via the formation of 2-isopropylmaleate. This chain is 3-isopropylmalate dehydratase (LEU1), found in Candida maltosa (Yeast).